A 333-amino-acid polypeptide reads, in one-letter code: Diacylglycerol acyltransferase/mycolyltransferase Ag85C (333 aa).

The N-terminal stretch at 1 to 44 (MKFLQQMRKLFGLAAKFPARLTIAVIGTALLAGLVGVVGDTAIA) is a signal peptide. 86–87 (LR) contacts substrate. Residues 102–112 (FEEYYHSGLSV) form a fibronectin-binding region. Substrate is bound by residues Ser170 and Asn198. Catalysis depends on Ser170, which acts as the Nucleophile. Residue Glu274 is part of the active site. Residues 276 to 279 (LTLS) and 306 to 308 (HSW) contribute to the substrate site. His306 is an active-site residue.

The protein belongs to the mycobacterial A85 antigen family. In terms of assembly, homodimer.

Its subcellular location is the secreted. The enzyme catalyses an acyl-CoA + a 1,2-diacyl-sn-glycerol = a triacyl-sn-glycerol + CoA. It catalyses the reaction 2 alpha,alpha'-trehalose 6-mycolate = alpha,alpha'-trehalose 6,6'-bismycolate + alpha,alpha-trehalose. Functionally, the antigen 85 proteins (FbpA, FbpB, FbpC) are responsible for the high affinity of mycobacteria to fibronectin, a large adhesive glycoprotein, which facilitates the attachment of M.tuberculosis to murine alveolar macrophages (AMs). They also help to maintain the integrity of the cell wall by catalyzing the transfer of mycolic acids to cell wall arabinogalactan and through the synthesis of alpha,alpha-trehalose dimycolate (TDM, cord factor). They catalyze the transfer of a mycoloyl residue from one molecule of alpha,alpha-trehalose monomycolate (TMM) to another TMM, leading to the formation of TDM. This chain is Diacylglycerol acyltransferase/mycolyltransferase Ag85C (fbpC), found in Mycobacterium leprae (strain TN).